The primary structure comprises 141 residues: Nucleoside diphosphate kinase (141 aa).

ATP contacts are provided by K11, F59, R87, T93, R104, and N114. The active-site Pros-phosphohistidine intermediate is the H117.

This sequence belongs to the NDK family. As to quaternary structure, homotetramer. Mg(2+) is required as a cofactor.

It localises to the cytoplasm. It carries out the reaction a 2'-deoxyribonucleoside 5'-diphosphate + ATP = a 2'-deoxyribonucleoside 5'-triphosphate + ADP. It catalyses the reaction a ribonucleoside 5'-diphosphate + ATP = a ribonucleoside 5'-triphosphate + ADP. Major role in the synthesis of nucleoside triphosphates other than ATP. The ATP gamma phosphate is transferred to the NDP beta phosphate via a ping-pong mechanism, using a phosphorylated active-site intermediate. This Variovorax paradoxus (strain S110) protein is Nucleoside diphosphate kinase.